We begin with the raw amino-acid sequence, 378 residues long: MSDHEDLNKAMGHWNASESYQLNPASVIVSVVFSLIFLLGTIGNSLVLAVLLRSGQVGYNTTNLFILNLSVADFFFIIFCVPFQATIYSLEGWVFGSFMCKVVHFFINLTMYASSFTLAAVSVDRYLAIRYPLRSRELRTPCNAVVAMVVIWGLSLVFAGPYLSYYDLIDFENSNVCVPGWEEHNRKVLDTCTFVFGYVIPVLIVSLSYTRTIKYLWTAVDPLDGMSESKRAKRKVTKMIIIVTVLFCICWLPYHVVILCYLYGDFPFNQTTYAFRLLSHCMAYANSCLNPIVYALVSKHFRKGFKKVFSCILSKKGRNKVHVVNVANTVPGFEAGSTEVSQMNEENARQNESEMVNRPLAQPQDTTMTITLPFQNQP.

Topologically, residues 1-30 (MSDHEDLNKAMGHWNASESYQLNPASVIVS) are extracellular. A helical membrane pass occupies residues 31–51 (VVFSLIFLLGTIGNSLVLAVL). Over 52-62 (LRSGQVGYNTT) the chain is Cytoplasmic. The helical transmembrane segment at 63-83 (NLFILNLSVADFFFIIFCVPF) threads the bilayer. The Extracellular portion of the chain corresponds to 84 to 101 (QATIYSLEGWVFGSFMCK). Residues Cys-100 and Cys-177 are joined by a disulfide bond. A helical membrane pass occupies residues 102–123 (VVHFFINLTMYASSFTLAAVSV). Residues 124-143 (DRYLAIRYPLRSRELRTPCN) are Cytoplasmic-facing. A helical membrane pass occupies residues 144–164 (AVVAMVVIWGLSLVFAGPYLS). The Extracellular segment spans residues 165–187 (YYDLIDFENSNVCVPGWEEHNRK). A helical membrane pass occupies residues 188-208 (VLDTCTFVFGYVIPVLIVSLS). Residues 209–238 (YTRTIKYLWTAVDPLDGMSESKRAKRKVTK) are Cytoplasmic-facing. The helical transmembrane segment at 239–259 (MIIIVTVLFCICWLPYHVVIL) threads the bilayer. At 260 to 276 (CYLYGDFPFNQTTYAFR) the chain is on the extracellular side. The helical transmembrane segment at 277 to 297 (LLSHCMAYANSCLNPIVYALV) threads the bilayer. The Cytoplasmic portion of the chain corresponds to 298-378 (SKHFRKGFKK…TITLPFQNQP (81 aa)). Residues 339–362 (EVSQMNEENARQNESEMVNRPLAQ) form a disordered region.

It belongs to the G-protein coupled receptor 1 family. In terms of tissue distribution, expressed in neurons in the ventral area of the interpeduncular nucleus (IPN) where expression often overlaps with spx1.

It localises to the membrane. In terms of biological role, receptor for the hormone galanin. Receptor for the hormones spexin-1 and spexin-2. This is Galanin receptor 2b from Danio rerio (Zebrafish).